A 323-amino-acid polypeptide reads, in one-letter code: Aldo-keto reductase family 1 member C18 (323 aa).

NADP(+) is bound by residues 20 to 24 and D50; that span reads GFGTY. Y55 (proton donor) is an active-site residue. Residue H117 coordinates substrate. NADP(+) contacts are provided by residues 166–167, Q190, 216–221, and 270–280; these read SN, YGALGT, and KSFNEERIREN.

This sequence belongs to the aldo/keto reductase family. As to quaternary structure, monomer. The N-terminus is blocked. As to expression, corpus luteum (large luteal cells).

The protein localises to the cytoplasm. The catalysed reaction is (17R,20S)-17,20-dihydroxypregn-4-en-3-one + NADP(+) = 17alpha-hydroxyprogesterone + NADPH + H(+). It catalyses the reaction (17R,20S)-17,20-dihydroxypregn-4-en-3-one + NAD(+) = 17alpha-hydroxyprogesterone + NADH + H(+). Its function is as follows. Catalyzes the conversion of progesterone into 20-alpha-dihydroprogesterone (20 alpha-OHP). This chain is Aldo-keto reductase family 1 member C18 (Akr1c18), found in Rattus norvegicus (Rat).